Here is a 144-residue protein sequence, read N- to C-terminus: Mannitol-specific phosphotransferase enzyme IIA component (144 aa).

Residues 3–142 enclose the PTS EIIA type-2 domain; it reads ELFSNDNIFL…EEIKQVFEEA (140 aa). The active-site Tele-phosphohistidine intermediate is histidine 63. The residue at position 63 (histidine 63) is a Phosphohistidine; by HPr.

As to quaternary structure, homodimer or homotrimer. Seems to be a monomer when not phosphorylated.

The protein resides in the cytoplasm. Functionally, the phosphoenolpyruvate-dependent sugar phosphotransferase system (sugar PTS), a major carbohydrate active transport system, catalyzes the phosphorylation of incoming sugar substrates concomitantly with their translocation across the cell membrane. The enzyme II CmtAB PTS system is involved in D-mannitol transport. This chain is Mannitol-specific phosphotransferase enzyme IIA component (mtlF), found in Staphylococcus aureus (strain MRSA252).